The sequence spans 409 residues: Ligand-gated cation channel ZACN (409 aa).

Residues 1–18 (MAPRLLLLLLAFLRLGTT) form the signal peptide. At 19 to 233 (GPLVQGRGFR…LRLQNTALKA (215 aa)) the chain is on the extracellular side. Asn55 and Asn99 each carry an N-linked (GlcNAc...) asparagine glycan. A disulfide bridge links Cys157 with Cys171. The chain crosses the membrane as a helical span at residues 234 to 254 (IIALLVPGEALLLADMCGGLL). Residues 255-265 (PLRATERIAYK) lie on the Cytoplasmic side of the membrane. The chain crosses the membrane as a helical span at residues 266–286 (VTLLLGYLVFHSSLVQALPSS). The Extracellular segment spans residues 287–296 (SSCNPLLIYY). A helical transmembrane segment spans residues 297-317 (FTVLLLLLFISTMETVLLAAL). Over 318-365 (QARGHLSARSSPIPTPRGEQQDHGDLGPHPEEAPGVKESRSWAEAADH) the chain is Cytoplasmic. The segment at 325–354 (ARSSPIPTPRGEQQDHGDLGPHPEEAPGVK) is disordered. A compositionally biased stretch (basic and acidic residues) spans 336–354 (EQQDHGDLGPHPEEAPGVK). A helical membrane pass occupies residues 366–386 (IFFLVYVVGVVCSQFFFIGFW). Topologically, residues 387-409 (MWATCKSDPAPGEAIPHGGQPRL) are extracellular.

This sequence belongs to the ligand-gated ion channel (TC 1.A.9) family. Glycosylated.

Its subcellular location is the cell membrane. It catalyses the reaction Na(+)(in) = Na(+)(out). It carries out the reaction K(+)(in) = K(+)(out). In terms of biological role, ligand-gated cation channel that allows the movement of sodium and potassium monoatomic cations across cell membranes when activated by zinc (Zn2+), copper (Cu2+), and changes in pH. Could also transport cesium. This chain is Ligand-gated cation channel ZACN, found in Canis lupus familiaris (Dog).